We begin with the raw amino-acid sequence, 143 residues long: Aspartate 1-decarboxylase (143 aa).

S25 (schiff-base intermediate with substrate; via pyruvic acid) is an active-site residue. Position 25 is a pyruvic acid (Ser) (S25). T57 contributes to the substrate binding site. The active-site Proton donor is the Y58. Residue 73–75 participates in substrate binding; the sequence is GAA.

It belongs to the PanD family. As to quaternary structure, heterooctamer of four alpha and four beta subunits. Pyruvate serves as cofactor. Is synthesized initially as an inactive proenzyme, which is activated by self-cleavage at a specific serine bond to produce a beta-subunit with a hydroxyl group at its C-terminus and an alpha-subunit with a pyruvoyl group at its N-terminus.

Its subcellular location is the cytoplasm. It carries out the reaction L-aspartate + H(+) = beta-alanine + CO2. It functions in the pathway cofactor biosynthesis; (R)-pantothenate biosynthesis; beta-alanine from L-aspartate: step 1/1. In terms of biological role, catalyzes the pyruvoyl-dependent decarboxylation of aspartate to produce beta-alanine. In Mycolicibacterium paratuberculosis (strain ATCC BAA-968 / K-10) (Mycobacterium paratuberculosis), this protein is Aspartate 1-decarboxylase.